A 141-amino-acid polypeptide reads, in one-letter code: Protein C19orf12 (141 aa).

A helical transmembrane segment spans residues 40-60; it reads FVGGLVGGPPGLAVGGAVGGL.

This sequence belongs to the C19orf12 family.

The protein localises to the mitochondrion. It is found in the mitochondrion membrane. It localises to the endoplasmic reticulum. The protein resides in the cytoplasm. Its subcellular location is the cytosol. This chain is Protein C19orf12 (C19orf12), found in Homo sapiens (Human).